Consider the following 176-residue polypeptide: RNA pyrophosphohydrolase (176 aa).

A Nudix hydrolase domain is found at 6–149 (GYRPNVGIII…KRNVYEMALT (144 aa)). The short motif at 38–59 (GGIKPGESPEAAMYRELMEEVG) is the Nudix box element.

It belongs to the Nudix hydrolase family. RppH subfamily. A divalent metal cation serves as cofactor.

Functionally, accelerates the degradation of transcripts by removing pyrophosphate from the 5'-end of triphosphorylated RNA, leading to a more labile monophosphorylated state that can stimulate subsequent ribonuclease cleavage. The polypeptide is RNA pyrophosphohydrolase (Laribacter hongkongensis (strain HLHK9)).